A 106-amino-acid chain; its full sequence is Large ribosomal subunit protein bL21 (106 aa).

This sequence belongs to the bacterial ribosomal protein bL21 family. In terms of assembly, part of the 50S ribosomal subunit. Contacts protein L20.

This protein binds to 23S rRNA in the presence of protein L20. This is Large ribosomal subunit protein bL21 from Chlamydia caviae (strain ATCC VR-813 / DSM 19441 / 03DC25 / GPIC) (Chlamydophila caviae).